Consider the following 294-residue polypeptide: ATP synthase gamma chain (294 aa).

It belongs to the ATPase gamma chain family. As to quaternary structure, F-type ATPases have 2 components, CF(1) - the catalytic core - and CF(0) - the membrane proton channel. CF(1) has five subunits: alpha(3), beta(3), gamma(1), delta(1), epsilon(1). CF(0) has three main subunits: a, b and c.

It localises to the cell inner membrane. Functionally, produces ATP from ADP in the presence of a proton gradient across the membrane. The gamma chain is believed to be important in regulating ATPase activity and the flow of protons through the CF(0) complex. The polypeptide is ATP synthase gamma chain (Campylobacter jejuni subsp. jejuni serotype O:23/36 (strain 81-176)).